The chain runs to 172 residues: Large ribosomal subunit protein uL10 (172 aa).

Belongs to the universal ribosomal protein uL10 family. Part of the ribosomal stalk of the 50S ribosomal subunit. The N-terminus interacts with L11 and the large rRNA to form the base of the stalk. The C-terminus forms an elongated spine to which L12 dimers bind in a sequential fashion forming a multimeric L10(L12)X complex.

In terms of biological role, forms part of the ribosomal stalk, playing a central role in the interaction of the ribosome with GTP-bound translation factors. The chain is Large ribosomal subunit protein uL10 from Rhodospirillum rubrum (strain ATCC 11170 / ATH 1.1.1 / DSM 467 / LMG 4362 / NCIMB 8255 / S1).